Here is a 397-residue protein sequence, read N- to C-terminus: Formate-dependent phosphoribosylglycinamide formyltransferase (397 aa).

N(1)-(5-phospho-beta-D-ribosyl)glycinamide contacts are provided by residues 21–22 (EL) and Glu-81. Residues Arg-113, Lys-154, 194 to 197 (EEFV), and Glu-202 each bind ATP. Residues 118–312 (RFAAEKLKLP…EFQIHVRSAI (195 aa)) enclose the ATP-grasp domain. The Mg(2+) site is built by Glu-271 and Glu-283. N(1)-(5-phospho-beta-D-ribosyl)glycinamide is bound by residues Asp-290, Lys-361, and 368 to 369 (RR).

The protein belongs to the PurK/PurT family. In terms of assembly, homodimer.

It carries out the reaction N(1)-(5-phospho-beta-D-ribosyl)glycinamide + formate + ATP = N(2)-formyl-N(1)-(5-phospho-beta-D-ribosyl)glycinamide + ADP + phosphate + H(+). Its pathway is purine metabolism; IMP biosynthesis via de novo pathway; N(2)-formyl-N(1)-(5-phospho-D-ribosyl)glycinamide from N(1)-(5-phospho-D-ribosyl)glycinamide (formate route): step 1/1. Functionally, involved in the de novo purine biosynthesis. Catalyzes the transfer of formate to 5-phospho-ribosyl-glycinamide (GAR), producing 5-phospho-ribosyl-N-formylglycinamide (FGAR). Formate is provided by PurU via hydrolysis of 10-formyl-tetrahydrofolate. This is Formate-dependent phosphoribosylglycinamide formyltransferase from Saccharolobus solfataricus (strain ATCC 35092 / DSM 1617 / JCM 11322 / P2) (Sulfolobus solfataricus).